Here is a 218-residue protein sequence, read N- to C-terminus: Ribose-5-phosphate isomerase A (218 aa).

Substrate-binding positions include 28-31, 81-84, and 94-97; these read TGST, DSAD, and KGKG. Catalysis depends on glutamate 103, which acts as the Proton acceptor. Lysine 121 serves as a coordination point for substrate.

The protein belongs to the ribose 5-phosphate isomerase family. As to quaternary structure, homodimer.

The enzyme catalyses aldehydo-D-ribose 5-phosphate = D-ribulose 5-phosphate. It functions in the pathway carbohydrate degradation; pentose phosphate pathway; D-ribose 5-phosphate from D-ribulose 5-phosphate (non-oxidative stage): step 1/1. Functionally, catalyzes the reversible conversion of ribose-5-phosphate to ribulose 5-phosphate. The polypeptide is Ribose-5-phosphate isomerase A (Blochmanniella pennsylvanica (strain BPEN)).